A 1385-amino-acid polypeptide reads, in one-letter code: DNA-directed RNA polymerase subunit beta (1385 aa).

The protein belongs to the RNA polymerase beta chain family. In terms of assembly, the RNAP catalytic core consists of 2 alpha, 1 beta, 1 beta' and 1 omega subunit. When a sigma factor is associated with the core the holoenzyme is formed, which can initiate transcription.

The enzyme catalyses RNA(n) + a ribonucleoside 5'-triphosphate = RNA(n+1) + diphosphate. DNA-dependent RNA polymerase catalyzes the transcription of DNA into RNA using the four ribonucleoside triphosphates as substrates. This is DNA-directed RNA polymerase subunit beta from Sulfurovum sp. (strain NBC37-1).